We begin with the raw amino-acid sequence, 1091 residues long: MKLLYTDIRTSLTEILTREAEELVAAGKRVFYIAPNSLSFEKERAVLECLSQQASFSITVTRFAQMARYLVLNDLPVKTTLDDIGLGLAFYKCLAELDPKDLRVYGAIKQDPQLIQQLIELYHEMTKSQMSFLDLENLTDEDKRTDLLLIFEKVTAYLNQGQLAQGSQLSHLIEAIENDKVSSDFNQITLVIDGFTRFSAEEERVVDLLHGKGVEIVIGAYASKKAYTSPFSEGNLYQASVKFLHHLASKYQTPAQDCSQTHEKMDSFDKASRLLESSYDFSELALDVDEKDRENLQIWSCLTQKEELELVARSIRQKLHENSDLSYKHFRILLGDVASYQLSLKTIFDQYQIPFYLGRSEAMAHHPLTQFVESILALKRYRFRQEDLINLLRTDLYTDLSQSDIDAFEQYIRYLGINGLPAFQQIFTKSHHGKFNLERLNVLRLRILAPLETLFASRKQKAENLLQKWSVFLKEGAVTKQLQDLTTTLEAVEQERQAEVWKAFCHVLEQFATVFAGSQVSLEDFLALLHSGMSLSQYRTIPATVDTVLVQSYDLIAPLTADFVYAIGLTQDNLPKISQNTSLLTDEERQNLNQATEEGVQLLIASSENLKKNRYTMLSLVNSARKQLFLSAPSLFNESESKESAYLQELIHFGFRRREKRMNHKGLSKEDMGSYHSLLSSLVAYHQQGEMSDTEQDLTFVKVLSRVIGKKLDLQGLENPAIPTSPSSKTLAKDTLQALYPAKQEFYLSTSGLTEFYRNEYSYFLRYVLGLQEELRLRPDARSHGNFLHRIFERALQLPNEDSFDQRLEQAIQETSQEREFEAIYQESLEAQFTKEVLLDVARTTGHILRHNPAIETIKEEANFGGKDQAFIQLDNGRSVFVRGKVDRIDRLKANGAIGVVDYKSSLTQFQFPHFFNGLNSQLPTYLAALKREGEQNFFGAMYLEMAEPVQSLMAVKSLAGAVVEASKSMKYQGLFLEKESSYLGEFYNKNKANQLTDEEFQLLLDYNAYLYKKAAEKILAGRFAINPYTENGRSIAPYVQQHQAITGFEANYHLGQARFLEKLDLADGKRLVGEKLKQAWFEKIREELNR.

Belongs to the helicase family. AddB/RexB type 2 subfamily. Heterodimer of AddA and RexB. It depends on Mg(2+) as a cofactor.

Functionally, the heterodimer acts as both an ATP-dependent DNA helicase and an ATP-dependent, dual-direction single-stranded exonuclease. Recognizes the chi site generating a DNA molecule suitable for the initiation of homologous recombination. This subunit has 5' -&gt; 3' nuclease activity but not helicase activity. This is ATP-dependent helicase/deoxyribonuclease subunit B from Streptococcus pneumoniae serotype 19F (strain G54).